A 1124-amino-acid chain; its full sequence is Eukaryotic translation initiation factor 3 subunit A (1124 aa).

Residues 96-124 are a coiled coil; sequence LKMAEERTEQAQQQSSQATVDIDDLDNLA. One can recognise a PCI domain in the interval 317–498; sequence IQRMTTHVLI…ECVHFGTDLS (182 aa). Composition is skewed to basic and acidic residues over residues 812–851 and 860–883; these read EERRRIEEELRKQKEEADRIERERRAEERRIQDEKNRQLA and EVERRRREELEQMKEADGRRERRP. The interval 812-1124 is disordered; the sequence is EERRRIEEEL…EEGWTDVKHR (313 aa). Residues 900–910 show a composition bias toward low complexity; that stretch reads PAAAAPANPAA. Composition is skewed to basic and acidic residues over residues 928–952, 960–990, 1007–1048, and 1063–1100; these read PRERGGETGPKDKWRTGPEDHEKDG, RGGDMRRGQDDRGPIRRGGGEERGEREDRGP, PRRD…RGGG, and DDNRRGPRDEGRQDTWRNTRQDAAPKQKEDRPQREARP.

It belongs to the eIF-3 subunit A family. As to quaternary structure, component of the eukaryotic translation initiation factor 3 (eIF-3) complex.

The protein resides in the cytoplasm. Functionally, RNA-binding component of the eukaryotic translation initiation factor 3 (eIF-3) complex, which is involved in protein synthesis of a specialized repertoire of mRNAs and, together with other initiation factors, stimulates binding of mRNA and methionyl-tRNAi to the 40S ribosome. The eIF-3 complex specifically targets and initiates translation of a subset of mRNAs involved in cell proliferation. In Anopheles gambiae (African malaria mosquito), this protein is Eukaryotic translation initiation factor 3 subunit A.